The sequence spans 388 residues: Queuine tRNA-ribosyltransferase (388 aa).

The active-site Proton acceptor is D90. Substrate is bound by residues 90–94 (DSGGF), D144, Q205, and G232. The RNA binding stretch occupies residues 263–269 (GVGTPED). D282 (nucleophile) is an active-site residue. Residues 287–291 (TRNAR) are RNA binding; important for wobble base 34 recognition. Zn(2+) contacts are provided by C320, C322, C325, and H351.

Belongs to the queuine tRNA-ribosyltransferase family. As to quaternary structure, homodimer. Within each dimer, one monomer is responsible for RNA recognition and catalysis, while the other monomer binds to the replacement base PreQ1. It depends on Zn(2+) as a cofactor.

It catalyses the reaction 7-aminomethyl-7-carbaguanine + guanosine(34) in tRNA = 7-aminomethyl-7-carbaguanosine(34) in tRNA + guanine. Its pathway is tRNA modification; tRNA-queuosine biosynthesis. Catalyzes the base-exchange of a guanine (G) residue with the queuine precursor 7-aminomethyl-7-deazaguanine (PreQ1) at position 34 (anticodon wobble position) in tRNAs with GU(N) anticodons (tRNA-Asp, -Asn, -His and -Tyr). Catalysis occurs through a double-displacement mechanism. The nucleophile active site attacks the C1' of nucleotide 34 to detach the guanine base from the RNA, forming a covalent enzyme-RNA intermediate. The proton acceptor active site deprotonates the incoming PreQ1, allowing a nucleophilic attack on the C1' of the ribose to form the product. After dissociation, two additional enzymatic reactions on the tRNA convert PreQ1 to queuine (Q), resulting in the hypermodified nucleoside queuosine (7-(((4,5-cis-dihydroxy-2-cyclopenten-1-yl)amino)methyl)-7-deazaguanosine). In Campylobacter curvus (strain 525.92), this protein is Queuine tRNA-ribosyltransferase.